Consider the following 486-residue polypeptide: Ribosomal RNA small subunit methyltransferase F (486 aa).

S-adenosyl-L-methionine-binding positions include 124–130 (ASAPGSK), Glu-148, Asp-175, and Asp-193. The Nucleophile role is filled by Cys-246.

Belongs to the class I-like SAM-binding methyltransferase superfamily. RsmB/NOP family.

It is found in the cytoplasm. The catalysed reaction is cytidine(1407) in 16S rRNA + S-adenosyl-L-methionine = 5-methylcytidine(1407) in 16S rRNA + S-adenosyl-L-homocysteine + H(+). Its function is as follows. Specifically methylates the cytosine at position 1407 (m5C1407) of 16S rRNA. In Shewanella putrefaciens (strain CN-32 / ATCC BAA-453), this protein is Ribosomal RNA small subunit methyltransferase F.